The following is a 74-amino-acid chain: EMBRYO SURROUNDING FACTOR 1-like protein 4 (74 aa).

A signal peptide spans 1–22; it reads MKSSHAYLVCILLLSLFSLHQC. Intrachain disulfides connect C36-C51, C41-C70, C49-C66, and C52-C59.

It belongs to the MEG family. Expressed in flowers.

The chain is EMBRYO SURROUNDING FACTOR 1-like protein 4 (ESFL4) from Arabidopsis thaliana (Mouse-ear cress).